Consider the following 132-residue polypeptide: MVKHQAQKKGVKRKQLKNIPSGIVHVKATFNNTIVSITDPAGNTISWASAGKVGYSGSRKSSAFAATVAAQDAAKIAMNSGLKEVEVCLKGTGAGRESAVRALIAAGLVVSVIRDETPVPHNGCRPRKRRRV.

The protein belongs to the universal ribosomal protein uS11 family. Part of the 30S ribosomal subunit. Interacts with proteins S7 and S18. Binds to IF-3.

In terms of biological role, located on the platform of the 30S subunit, it bridges several disparate RNA helices of the 16S rRNA. Forms part of the Shine-Dalgarno cleft in the 70S ribosome. The sequence is that of Small ribosomal subunit protein uS11 from Chlamydia abortus (strain DSM 27085 / S26/3) (Chlamydophila abortus).